A 359-amino-acid polypeptide reads, in one-letter code: MTIKLAIDCMGGDHGVSVTVPAAISFLSSHDDAEMILVGLPDAIGAQLKKLHATDHPRVTVVPATEVITMDDPVEVALRKKKDSSMRVAATQVKEGKADACISAGNTGALMAVSRYVLKTLEGIERPAIATTIPNEQGWGTTVLDLGANADCEPGHLLQFARMADAMVSVVDHKEHPTVGLLNIGEEVIKGNEVVKAAGELLRASELNFYGNVEGNDIFKGTTDIVVCDGFVGNVALKSTEGLAKMIGSMIKEEFTRSWFTKLLAVVAMPVLSRLARRLDPARYNGASLLGLRGLVIKSHGSADAHSFEWAIKRGYDAARNGVIERIARAFAHKSGAGGAATGSPETDAPNPHPDSRAA.

Residues 335–359 form a disordered region; the sequence is SGAGGAATGSPETDAPNPHPDSRAA.

This sequence belongs to the PlsX family. Homodimer. Probably interacts with PlsY.

The protein localises to the cytoplasm. The enzyme catalyses a fatty acyl-[ACP] + phosphate = an acyl phosphate + holo-[ACP]. Its pathway is lipid metabolism; phospholipid metabolism. Catalyzes the reversible formation of acyl-phosphate (acyl-PO(4)) from acyl-[acyl-carrier-protein] (acyl-ACP). This enzyme utilizes acyl-ACP as fatty acyl donor, but not acyl-CoA. This is Phosphate acyltransferase from Cupriavidus metallidurans (strain ATCC 43123 / DSM 2839 / NBRC 102507 / CH34) (Ralstonia metallidurans).